A 324-amino-acid polypeptide reads, in one-letter code: Beta-ketoacyl-[acyl-carrier-protein] synthase III (324 aa).

Catalysis depends on residues C114 and H251. An ACP-binding region spans residues 252–256 (QANKR). Residue N281 is part of the active site.

The protein belongs to the thiolase-like superfamily. FabH family. In terms of assembly, homodimer.

It is found in the cytoplasm. It catalyses the reaction malonyl-[ACP] + acetyl-CoA + H(+) = 3-oxobutanoyl-[ACP] + CO2 + CoA. The protein operates within lipid metabolism; fatty acid biosynthesis. Functionally, catalyzes the condensation reaction of fatty acid synthesis by the addition to an acyl acceptor of two carbons from malonyl-ACP. Catalyzes the first condensation reaction which initiates fatty acid synthesis and may therefore play a role in governing the total rate of fatty acid production. Possesses both acetoacetyl-ACP synthase and acetyl transacylase activities. Its substrate specificity determines the biosynthesis of branched-chain and/or straight-chain of fatty acids. The sequence is that of Beta-ketoacyl-[acyl-carrier-protein] synthase III from Bradyrhizobium sp. (strain BTAi1 / ATCC BAA-1182).